A 1184-amino-acid polypeptide reads, in one-letter code: DNA-directed RNA polymerase subunit beta (1184 aa).

Positions 1160 to 1184 (DDDFTNQNDAFNIVQPENAAAEKTE) are disordered.

It belongs to the RNA polymerase beta chain family. The RNAP catalytic core consists of 2 alpha, 1 beta, 1 beta' and 1 omega subunit. When a sigma factor is associated with the core the holoenzyme is formed, which can initiate transcription.

The catalysed reaction is RNA(n) + a ribonucleoside 5'-triphosphate = RNA(n+1) + diphosphate. In terms of biological role, DNA-dependent RNA polymerase catalyzes the transcription of DNA into RNA using the four ribonucleoside triphosphates as substrates. The chain is DNA-directed RNA polymerase subunit beta from Listeria welshimeri serovar 6b (strain ATCC 35897 / DSM 20650 / CCUG 15529 / CIP 8149 / NCTC 11857 / SLCC 5334 / V8).